The following is a 346-amino-acid chain: Probable choline kinase 1 (346 aa).

Positions 73, 210, and 227 each coordinate ATP.

It belongs to the choline/ethanolamine kinase family. In terms of tissue distribution, expressed in roots. Expressed at low levels in cauline leaves and flowers.

It carries out the reaction choline + ATP = phosphocholine + ADP + H(+). The protein operates within phospholipid metabolism; phosphatidylcholine biosynthesis; phosphocholine from choline: step 1/1. In terms of biological role, involved in phospholipid biosynthesis. Catalyzes the first step in phosphatidylcholine biosynthesis. The protein is Probable choline kinase 1 (CK1) of Arabidopsis thaliana (Mouse-ear cress).